Here is a 211-residue protein sequence, read N- to C-terminus: Probable cytokinin riboside 5'-monophosphate phosphoribohydrolase LOGL3 (211 aa).

Residues Glu84, 102-103 (RK), 119-125 (GYGTLEE), and Thr131 contribute to the substrate site.

This sequence belongs to the LOG family. Expressed in roots, leaves, stems, tiller buds, shoot apex, immature inflorescences and flowers.

It carries out the reaction N(6)-(dimethylallyl)adenosine 5'-phosphate + H2O = N(6)-dimethylallyladenine + D-ribose 5-phosphate. It catalyses the reaction 9-ribosyl-trans-zeatin 5'-phosphate + H2O = trans-zeatin + D-ribose 5-phosphate. Cytokinin-activating enzyme working in the direct activation pathway. Phosphoribohydrolase that converts inactive cytokinin nucleotides to the biologically active free-base forms. In Oryza sativa subsp. japonica (Rice), this protein is Probable cytokinin riboside 5'-monophosphate phosphoribohydrolase LOGL3 (LOGL3).